Reading from the N-terminus, the 136-residue chain is Large ribosomal subunit protein uL16 (136 aa).

It belongs to the universal ribosomal protein uL16 family. Part of the 50S ribosomal subunit.

In terms of biological role, binds 23S rRNA and is also seen to make contacts with the A and possibly P site tRNAs. This chain is Large ribosomal subunit protein uL16, found in Shewanella pealeana (strain ATCC 700345 / ANG-SQ1).